Here is a 390-residue protein sequence, read N- to C-terminus: GTPase Obg (390 aa).

Residues 1–159 (MKFVDEAAIL…RELMLELLLL (159 aa)) form the Obg domain. Positions 160–333 (ADVGMLGLPN…LCWDVMSFLN (174 aa)) constitute an OBG-type G domain. Residues 166-173 (GLPNAGKS), 191-195 (FTTLI), 213-216 (DIPG), 283-286 (NKID), and 314-316 (SAA) contribute to the GTP site. Mg(2+) is bound by residues S173 and T193. Positions 364 to 384 (VEAEAEDDWDDDWDEEDDDGV) are enriched in acidic residues. The disordered stretch occupies residues 364–390 (VEAEAEDDWDDDWDEEDDDGVEIIYER).

Belongs to the TRAFAC class OBG-HflX-like GTPase superfamily. OBG GTPase family. Monomer. Mg(2+) is required as a cofactor.

The protein localises to the cytoplasm. Its function is as follows. An essential GTPase which binds GTP, GDP and possibly (p)ppGpp with moderate affinity, with high nucleotide exchange rates and a fairly low GTP hydrolysis rate. Plays a role in control of the cell cycle, stress response, ribosome biogenesis and in those bacteria that undergo differentiation, in morphogenesis control. This chain is GTPase Obg, found in Yersinia pestis.